Reading from the N-terminus, the 183-residue chain is Bifunctional protein PyrR (183 aa).

Residues 102–114 carry the PRPP-binding motif; sequence VVLVDDVLYTGRT.

This sequence belongs to the purine/pyrimidine phosphoribosyltransferase family. PyrR subfamily. Homodimer and homohexamer; in equilibrium.

The enzyme catalyses UMP + diphosphate = 5-phospho-alpha-D-ribose 1-diphosphate + uracil. Functionally, regulates transcriptional attenuation of the pyrimidine nucleotide (pyr) operon by binding in a uridine-dependent manner to specific sites on pyr mRNA. This disrupts an antiterminator hairpin in the RNA and favors formation of a downstream transcription terminator, leading to a reduced expression of downstream genes. In terms of biological role, also displays a weak uracil phosphoribosyltransferase activity which is not physiologically significant. The chain is Bifunctional protein PyrR from Listeria welshimeri serovar 6b (strain ATCC 35897 / DSM 20650 / CCUG 15529 / CIP 8149 / NCTC 11857 / SLCC 5334 / V8).